The chain runs to 28 residues: Kalata-B12 (28 aa).

The cyclopeptide (Gly-Asp) cross-link spans 1–28 (GSLCGDTCFVLGCNDSSCSCNYPICVKD). Cystine bridges form between Cys4–Cys18, Cys8–Cys20, and Cys13–Cys25.

This is a cyclic peptide.

Functionally, probably participates in a plant defense mechanism. The sequence is that of Kalata-B12 from Oldenlandia affinis.